The primary structure comprises 341 residues: UDP-3-O-(3-hydroxymyristoyl)glucosamine N-acyltransferase (341 aa).

His-239 (proton acceptor) is an active-site residue.

The protein belongs to the transferase hexapeptide repeat family. LpxD subfamily. In terms of assembly, homotrimer.

The enzyme catalyses a UDP-3-O-[(3R)-3-hydroxyacyl]-alpha-D-glucosamine + a (3R)-hydroxyacyl-[ACP] = a UDP-2-N,3-O-bis[(3R)-3-hydroxyacyl]-alpha-D-glucosamine + holo-[ACP] + H(+). It catalyses the reaction UDP-3-O-[(3R)-3-hydroxytetradecanoyl]-alpha-D-glucosamine + (3R)-hydroxytetradecanoyl-[ACP] = UDP-2-N,3-O-bis[(3R)-3-hydroxytetradecanoyl]-alpha-D-glucosamine + holo-[ACP] + H(+). It functions in the pathway glycolipid biosynthesis; lipid IV(A) biosynthesis; lipid IV(A) from (3R)-3-hydroxytetradecanoyl-[acyl-carrier-protein] and UDP-N-acetyl-alpha-D-glucosamine: step 3/6. In terms of biological role, catalyzes the N-acylation of UDP-3-O-(hydroxytetradecanoyl)glucosamine using 3-hydroxytetradecanoyl-ACP as the acyl donor. Is involved in the biosynthesis of lipid A, a phosphorylated glycolipid that anchors the lipopolysaccharide to the outer membrane of the cell. This chain is UDP-3-O-(3-hydroxymyristoyl)glucosamine N-acyltransferase, found in Salmonella paratyphi A (strain ATCC 9150 / SARB42).